Reading from the N-terminus, the 113-residue chain is Fruiting body-specific class I hydrophobin fbh1 (113 aa).

A signal peptide spans 1–23; sequence MFSIRIATVVLAASAALRPPARI. Disulfide bonds link C33–C92, C40–C86, C41–C73, and C93–C106.

The protein belongs to the fungal hydrophobin family. As to quaternary structure, self-assembles to form functional amyloid fibrils called rodlets. Self-assembly into fibrillar rodlets occurs spontaneously at hydrophobic:hydrophilic interfaces and the rodlets further associate laterally to form amphipathic monolayers.

The protein resides in the secreted. Its subcellular location is the cell wall. Aerial growth, conidiation, and dispersal of filamentous fungi in the environment rely upon a capability of their secreting small amphipathic proteins called hydrophobins (HPBs) with low sequence identity. Class I can self-assemble into an outermost layer of rodlet bundles on aerial cell surfaces, conferring cellular hydrophobicity that supports fungal growth, development and dispersal; whereas Class II form highly ordered films at water-air interfaces through intermolecular interactions but contribute nothing to the rodlet structure. Fbh1 is a fruiting body-specific class I hydrophobin that is involved in the growth rate and primordia formation. The sequence is that of Fruiting body-specific class I hydrophobin fbh1 from Pleurotus ostreatus (Oyster mushroom).